We begin with the raw amino-acid sequence, 1427 residues long: DNA-directed RNA polymerase subunit beta' (1427 aa).

Residues cysteine 66, cysteine 68, cysteine 81, and cysteine 84 each contribute to the Zn(2+) site. Aspartate 472, aspartate 474, and aspartate 476 together coordinate Mg(2+). The Zn(2+) site is built by cysteine 815, cysteine 889, cysteine 896, and cysteine 899.

It belongs to the RNA polymerase beta' chain family. As to quaternary structure, the RNAP catalytic core consists of 2 alpha, 1 beta, 1 beta' and 1 omega subunit. When a sigma factor is associated with the core the holoenzyme is formed, which can initiate transcription. It depends on Mg(2+) as a cofactor. Zn(2+) serves as cofactor.

It carries out the reaction RNA(n) + a ribonucleoside 5'-triphosphate = RNA(n+1) + diphosphate. In terms of biological role, DNA-dependent RNA polymerase catalyzes the transcription of DNA into RNA using the four ribonucleoside triphosphates as substrates. This Bacteroides thetaiotaomicron (strain ATCC 29148 / DSM 2079 / JCM 5827 / CCUG 10774 / NCTC 10582 / VPI-5482 / E50) protein is DNA-directed RNA polymerase subunit beta'.